We begin with the raw amino-acid sequence, 182 residues long: Ferredoxin-thioredoxin reductase subunit A1, chloroplastic (182 aa).

The transit peptide at 1-81 (MSSQIALSPA…VAIKSADSIN (81 aa)) directs the protein to the chloroplast.

Belongs to the ferredoxin thioredoxin reductase alpha subunit family. Heterodimer of subunit A (variable subunit) and subunit B (catalytic subunit). Heterodimeric FTR forms a complex with ferredoxin and thioredoxin.

It localises to the plastid. The protein localises to the chloroplast. Functionally, variable subunit of the ferredoxin-thioredoxin reductase (FTR), which catalyzes the two-electron reduction of thioredoxins by the electrons provided by reduced ferredoxin. This is Ferredoxin-thioredoxin reductase subunit A1, chloroplastic from Arabidopsis thaliana (Mouse-ear cress).